The chain runs to 261 residues: Cytochrome c oxidase subunit 3 (261 aa).

At 1–15 (MTHQTHACHMVNPSP) the chain is on the mitochondrial matrix side. The helical transmembrane segment at 16 to 34 (WPLTGALSGLLMTSGLIMW) threads the bilayer. Topologically, residues 35 to 40 (FHFNST) are mitochondrial intermembrane. Residues 41–66 (TLLMLGLTTNMLTMYQWWRDVIREST) traverse the membrane as a helical segment. The Mitochondrial matrix portion of the chain corresponds to 67–72 (FQGHHT). A helical membrane pass occupies residues 73 to 105 (PNVQKGLRYGMILFIISEVLFFTGFFWAFYHSS). The Mitochondrial intermembrane segment spans residues 106 to 128 (LAPTPELGGCWPPTGIHPLNPLE). Residues 129–152 (VPLLNTSVLLASGVSITWAHHSLM) traverse the membrane as a helical segment. The Mitochondrial matrix portion of the chain corresponds to 153 to 155 (EGN). The helical transmembrane segment at 156 to 183 (RNHMLQALFITIALGVYFTLLQASEYYE) threads the bilayer. Residues 184–190 (APFTISD) are Mitochondrial intermembrane-facing. A helical transmembrane segment spans residues 191 to 223 (GVYGSTFFVATGFHGLHVIIGSTFLIVCFFRQL). Residues 224 to 232 (KFHFTSSHH) are Mitochondrial matrix-facing. A helical transmembrane segment spans residues 233-256 (FGFEAAAWYWHFVDVVWLFLYVSI). The Mitochondrial intermembrane segment spans residues 257–261 (YWWGS).

Belongs to the cytochrome c oxidase subunit 3 family. As to quaternary structure, component of the cytochrome c oxidase (complex IV, CIV), a multisubunit enzyme composed of 14 subunits. The complex is composed of a catalytic core of 3 subunits MT-CO1, MT-CO2 and MT-CO3, encoded in the mitochondrial DNA, and 11 supernumerary subunits COX4I, COX5A, COX5B, COX6A, COX6B, COX6C, COX7A, COX7B, COX7C, COX8 and NDUFA4, which are encoded in the nuclear genome. The complex exists as a monomer or a dimer and forms supercomplexes (SCs) in the inner mitochondrial membrane with NADH-ubiquinone oxidoreductase (complex I, CI) and ubiquinol-cytochrome c oxidoreductase (cytochrome b-c1 complex, complex III, CIII), resulting in different assemblies (supercomplex SCI(1)III(2)IV(1) and megacomplex MCI(2)III(2)IV(2)).

The protein resides in the mitochondrion inner membrane. The catalysed reaction is 4 Fe(II)-[cytochrome c] + O2 + 8 H(+)(in) = 4 Fe(III)-[cytochrome c] + 2 H2O + 4 H(+)(out). Component of the cytochrome c oxidase, the last enzyme in the mitochondrial electron transport chain which drives oxidative phosphorylation. The respiratory chain contains 3 multisubunit complexes succinate dehydrogenase (complex II, CII), ubiquinol-cytochrome c oxidoreductase (cytochrome b-c1 complex, complex III, CIII) and cytochrome c oxidase (complex IV, CIV), that cooperate to transfer electrons derived from NADH and succinate to molecular oxygen, creating an electrochemical gradient over the inner membrane that drives transmembrane transport and the ATP synthase. Cytochrome c oxidase is the component of the respiratory chain that catalyzes the reduction of oxygen to water. Electrons originating from reduced cytochrome c in the intermembrane space (IMS) are transferred via the dinuclear copper A center (CU(A)) of subunit 2 and heme A of subunit 1 to the active site in subunit 1, a binuclear center (BNC) formed by heme A3 and copper B (CU(B)). The BNC reduces molecular oxygen to 2 water molecules using 4 electrons from cytochrome c in the IMS and 4 protons from the mitochondrial matrix. The chain is Cytochrome c oxidase subunit 3 (MT-CO3) from Gazella saudiya (Saudi gazelle).